Reading from the N-terminus, the 492-residue chain is Glutamate--cysteine ligase A, chloroplastic (492 aa).

Cysteines 156 and 376 form a disulfide.

The protein belongs to the carboxylate-amine ligase family. Glutamate--cysteine ligase type 2 subfamily. Homodimer or monomer when oxidized or reduced, respectively. In terms of processing, the Cys-156-Cys-376 disulfide bridge is known to modulate the enzyme activity according to the redox status. The oxidized form constitutes the active enzyme.

The protein localises to the plastid. The protein resides in the chloroplast. The catalysed reaction is L-cysteine + L-glutamate + ATP = gamma-L-glutamyl-L-cysteine + ADP + phosphate + H(+). It participates in sulfur metabolism; glutathione biosynthesis; glutathione from L-cysteine and L-glutamate: step 1/2. In Oryza sativa subsp. indica (Rice), this protein is Glutamate--cysteine ligase A, chloroplastic (GSH1-1).